Here is an 81-residue protein sequence, read N- to C-terminus: Cysteine-rich and transmembrane domain-containing protein PCC1 (81 aa).

Residues 1–22 (MNQSAQNYFSVQKPSETSSGPY) are compositionally biased toward polar residues. Positions 1-34 (MNQSAQNYFSVQKPSETSSGPYTSPPPIGYPTRD) are disordered. Residues 56 to 74 (AIMSCFSTCMECIFCCGVC) traverse the membrane as a helical segment.

The protein belongs to the CYSTM1 family. As to expression, expressed at very low levels in seedlings and petioles, and at higher levels in leaves. Also present in phloem sap.

It localises to the cell membrane. In terms of biological role, modulates resistance against pathogens including oomycetes (e.g. Hyaloperonospora parasitica and Phytophthora brassicae) and fungi (e.g. Phytophthora brassicae). Controls the abscisic acid-mediated (ABA) signaling pathways. Regulator of the flowering time in response to stress (e.g. UV-C). Regulates polar lipid content; promotes phosphatidylinositol (PI) and 18:0 but prevents 18:2 and 18:3 polar lipids accumulation. The polypeptide is Cysteine-rich and transmembrane domain-containing protein PCC1 (PCC1) (Arabidopsis thaliana (Mouse-ear cress)).